A 172-amino-acid chain; its full sequence is R-phycocyanin beta subunit (172 aa).

N4-methylasparagine is present on N72. C82 provides a ligand contact to (2R,3E)-phycocyanobilin. C153 is a (2R,3E)-phycoerythrobilin binding site.

This sequence belongs to the phycobiliprotein family. In terms of assembly, heterodimer of an alpha and a beta subunit, which further assembles into trimers and the trimers into hexamers. Contains two covalently linked bilin chromophores.

Its subcellular location is the cellular thylakoid membrane. Light-harvesting photosynthetic bile pigment-protein from the phycobiliprotein complex (phycobilisome, PBS). Phycocyanin is the major phycobiliprotein in the PBS rod. The sequence is that of R-phycocyanin beta subunit (rpcB) from Synechococcus sp. (strain WH7803).